A 625-amino-acid chain; its full sequence is MNAAPTVLQQQAQSLSEAVTQPIPGSRKIFVQGSRADLQVPMREIALTRTPTLFGGEENPPLSVYDTSGPYTDPRVAIDLAAGLAPLRAQWIAERGDTVALDGLSSSFGRGREHDVRLDAVRFPARRLPRVARQGANVTQMHYARRGIITPEMEYVAIRENQRLEAVTDASLRRQHPGQAFGASIQQRITPEFVREEIARGRAILPNNINHPESEPMIIGRNFLTKINANIGNSAVSSGIAEEVEKLVWSIRWGGDTVMDLSTGKHIHETREWIIRNSPVPIGTVPIYQALEKVDGRAEALTWEIFRDTLIEQAEQGVDYFTIHAGVLLRYVPLTAQRVTGIVSRGGSIMAKWCLAHHKENFLYTHFEDICQIMKAYDVAFSLGDGLRPGCIADANDAAQFGELETLGELTKLAWKHDVQTMIEGPGHVPMQLIKENMDKQLRECGEAPFYTLGPLTTDIAPGYDHITSAIGAAMIGWFGTAMLCYVTPKEHLGLPNRQDVRDGIMAYKIAAHAADLAKGHPGAQVRDNALSKARFEFRWDDQFHLGLDPEKAKEFHDQTLPKDAHKLAHFCSMCGPHFCSMKITQDVRDYAAEHGMSEAQALSTGMQEKSAQFVAQGAQVYRAT.

Residues asparagine 230, methionine 259, tyrosine 288, histidine 324, 344-346 (SRG), 385-388 (DGLR), and glutamate 424 contribute to the substrate site. Histidine 428 contacts Zn(2+). Substrate is bound at residue tyrosine 451. Histidine 492 is a Zn(2+) binding site. 3 residues coordinate [4Fe-4S] cluster: cysteine 572, cysteine 575, and cysteine 580.

This sequence belongs to the ThiC family. Homodimer. [4Fe-4S] cluster serves as cofactor.

It carries out the reaction 5-amino-1-(5-phospho-beta-D-ribosyl)imidazole + S-adenosyl-L-methionine = 4-amino-2-methyl-5-(phosphooxymethyl)pyrimidine + CO + 5'-deoxyadenosine + formate + L-methionine + 3 H(+). Its pathway is cofactor biosynthesis; thiamine diphosphate biosynthesis. In terms of biological role, catalyzes the synthesis of the hydroxymethylpyrimidine phosphate (HMP-P) moiety of thiamine from aminoimidazole ribotide (AIR) in a radical S-adenosyl-L-methionine (SAM)-dependent reaction. This is Phosphomethylpyrimidine synthase from Xanthomonas euvesicatoria pv. vesicatoria (strain 85-10) (Xanthomonas campestris pv. vesicatoria).